A 389-amino-acid polypeptide reads, in one-letter code: Chalcone synthase 4 (389 aa).

Cys-164 is an active-site residue.

Belongs to the thiolase-like superfamily. Chalcone/stilbene synthases family.

The catalysed reaction is (E)-4-coumaroyl-CoA + 3 malonyl-CoA + 3 H(+) = 2',4,4',6'-tetrahydroxychalcone + 3 CO2 + 4 CoA. The protein operates within secondary metabolite biosynthesis; flavonoid biosynthesis. Its function is as follows. The primary product of this enzyme is 4,2',4',6'-tetrahydroxychalcone (also termed naringenin-chalcone or chalcone) which can under specific conditions spontaneously isomerize into naringenin. The chain is Chalcone synthase 4 (CHS4) from Medicago sativa (Alfalfa).